Here is a 474-residue protein sequence, read N- to C-terminus: uncharacterized protein (474 aa).

The next 10 membrane-spanning stretches (helical) occupy residues 17-39, 44-61, 81-103, 144-166, 186-208, 239-256, 268-286, 319-341, 385-407, and 444-466; these read ILGG…SVYY, FLNF…GFVL, LAWL…YFSY, GVGI…YLLY, IIWI…GLSF, IVMI…FSIH, IQTK…IISI, LSLF…TGGV, AFVV…IALG, and IIAM…TLYF.

The protein belongs to the TrkH potassium transport family.

It localises to the cell membrane. This is an uncharacterized protein from Methanocaldococcus jannaschii (strain ATCC 43067 / DSM 2661 / JAL-1 / JCM 10045 / NBRC 100440) (Methanococcus jannaschii).